The chain runs to 301 residues: RNA polymerase II holoenzyme cyclin-like subunit (301 aa).

Residues 53–142 (QQLIKLGKRT…LGECEFALIS (90 aa)) enclose the Cyclin N-terminal domain.

Belongs to the cyclin family. Cyclin C subfamily. Component of the srb8-11 complex, a regulatory module of the Mediator complex.

The protein resides in the nucleus. In terms of biological role, component of the srb8-11 complex. The srb8-11 complex is a regulatory module of the Mediator complex which is itself involved in regulation of basal and activated RNA polymerase II-dependent transcription. The srb8-11 complex may be involved in the transcriptional repression of a subset of genes regulated by Mediator. It may inhibit the association of the Mediator complex with RNA polymerase II to form the holoenzyme complex. The srb8-11 complex phosphorylates the C-terminal domain (CTD) of the largest subunit of RNA polymerase II. The protein is RNA polymerase II holoenzyme cyclin-like subunit (ssn8) of Aspergillus terreus (strain NIH 2624 / FGSC A1156).